The sequence spans 89 residues: Cell division topological specificity factor (89 aa).

It belongs to the MinE family.

Its function is as follows. Prevents the cell division inhibition by proteins MinC and MinD at internal division sites while permitting inhibition at polar sites. This ensures cell division at the proper site by restricting the formation of a division septum at the midpoint of the long axis of the cell. This Clostridium beijerinckii (strain ATCC 51743 / NCIMB 8052) (Clostridium acetobutylicum) protein is Cell division topological specificity factor.